The primary structure comprises 172 residues: Podoplanin (172 aa).

The first 22 residues, 1–22 (MWTVPVLFWVLGSVWFWDSAQG), serve as a signal peptide directing secretion. The Extracellular portion of the chain corresponds to 23–141 (GTIGVNEDDI…KKDGLPVVTL (119 aa)). 5 O-linked (GalNAc...) threonine glycosylation sites follow: Thr-37, Thr-51, Thr-52, Thr-53, and Thr-56. The segment at 49–132 (KITTTGATGG…AGDETQTTDK (84 aa)) is disordered. The span at 51-63 (TTTGATGGLNEST) shows a compositional bias: polar residues. A glycan (N-linked (GlcNAc...) asparagine) is linked at Asn-60. O-linked (GalNAc...) threonine glycosylation is found at Thr-63, Thr-71, and Thr-77. Residues 72–81 (QRERGTKPPL) are compositionally biased toward basic and acidic residues. O-linked (GalNAc...) serine glycosylation is present at Ser-85. The O-linked (GalNAc...) threonine glycan is linked to Thr-86. The O-linked (GalNAc...) serine glycan is linked to Ser-87. A glycan (O-linked (GalNAc...) threonine) is linked at Thr-89. Ser-90 carries an O-linked (GalNAc...) serine glycan. A compositionally biased stretch (basic and acidic residues) spans 90–99 (SDHDHREHES). 5 O-linked (GalNAc...) threonine glycosylation sites follow: Thr-100, Thr-101, Thr-102, Thr-107, and Thr-115. A compositionally biased stretch (low complexity) spans 100–109 (TTTVKVVTSH). Positions 110-132 (SVDKKTSHPNRDNAGDETQTTDK) are enriched in basic and acidic residues. The chain crosses the membrane as a helical span at residues 142–162 (VGIIVGVLLAIGFVGGIFIVV). Residues 143–147 (GIIVG) are requires for dimerization and lipidd rafts association. Residues 163–172 (MKKISGRFSP) lie on the Cytoplasmic side of the membrane. The tract at residues 164–165 (KK) is requires for interaction with MSN and EZR.

It belongs to the podoplanin family. As to quaternary structure, homodimer. Interacts with CLEC1B; the interaction is independent of CLEC1B glycosylation and activates CLEC1B; the interaction is dependent of sialic acid on O-glycans. Interacts with CD9; this interaction is homophilic and attenuates platelet aggregation and pulmonary metastasis induced by PDPN. Interacts with LGALS8; the interaction is glycosylation-dependent; may participate in connection of the lymphatic endothelium to the surrounding extracellular matrix. Interacts with HSPA9. Interacts (via extracellular domain) with CD44; this interaction is required for PDPN-mediated directional migration and regulation of lamellipodia extension/stabilization during cell spreading and migration. Interacts (via cytoplasmic domain) with MSN and EZR; activates RHOA and promotes epithelial-mesenchymal transition. Interacts with CCL21; relocalized PDPN to the basolateral membrane. Extensively O-glycosylated. Contains sialic acid residues. O-glycosylation is necessary for platelet aggregation activity. Disialylated at Thr-52; sialic acid is critical for platelet-aggregating activity and for CLEC1B interaction. In terms of processing, phosphorylated by PKA; decreases cell migration. Post-translationally, the N-terminus is blocked. As to expression, detected at high levels in lung and brain, at lower levels in kidney, stomach, liver, spleen and esophagus, and not detected in skin and small intestine. Expressed in epithelial cells of choroid plexus, ependyma, glomerulus and alveolus, in mesothelial cells and in endothelia of lymphatic vessels. Also expressed in stromal cells of peripheral lymphoid tissue and thymic epithelial cells. Detected in carcinoma cell lines and cultured fibroblasts. Expressed at higher levels in colon carcinomas than in normal colon tissue.

The protein localises to the membrane. The protein resides in the cell projection. It localises to the lamellipodium membrane. It is found in the filopodium membrane. Its subcellular location is the microvillus membrane. The protein localises to the ruffle membrane. The protein resides in the membrane raft. It localises to the apical cell membrane. It is found in the basolateral cell membrane. Its subcellular location is the invadopodium. Mediates effects on cell migration and adhesion through its different partners. During development plays a role in blood and lymphatic vessels separation by binding CLEC1B, triggering CLEC1B activation in platelets and leading to platelet activation and/or aggregation. Interaction with CD9, on the contrary, attenuates platelet aggregation and pulmonary metastasis induced by PDPN. Mediates effects on cell migration and adhesion through its different partners. Through MSN or EZR interaction promotes epithelial-mesenchymal transition (EMT) leading to ERZ phosphorylation and triggering RHOA activation leading to cell migration increase and invasiveness. Interaction with CD44 promotes directional cell migration in epithelial and tumor cells. In lymph nodes (LNs), controls fibroblastic reticular cells (FRCs) adhesion to the extracellular matrix (ECM) and contraction of the actomyosin by maintaining ERM proteins (EZR; MSN and RDX) and MYL9 activation through association with unknown transmembrane proteins. Engagement of CLEC1B by PDPN promotes FRCs relaxation by blocking lateral membrane interactions leading to reduction of ERM proteins (EZR; MSN and RDX) and MYL9 activation. Through binding with LGALS8 may participate in connection of the lymphatic endothelium to the surrounding extracellular matrix. In keratinocytes, induces changes in cell morphology showing an elongated shape, numerous membrane protrusions, major reorganization of the actin cytoskeleton, increased motility and decreased cell adhesion. Controls invadopodia stability and maturation leading to efficient degradation of the extracellular matrix (ECM) in tumor cells through modulation of RHOC activity in order to activate ROCK1/ROCK2 and LIMK1/LIMK2 and inactivation of CFL1. Required for normal lung cell proliferation and alveolus formation at birth. Does not function as a water channel or as a regulator of aquaporin-type water channels. Does not have any effect on folic acid or amino acid transport. This chain is Podoplanin, found in Mus musculus (Mouse).